The following is a 316-amino-acid chain: MNDVSKASLPKAIFLMGPTASGKTALAIELRKVLPVELISVDSALIYRGMDIGTAKPNADELKAAPHRLLDIRDPSQAYSAADFRRDALAQMAEITSAGRIPLLVGGTMLYFKALLEGLSPLPSADPEVRSRIEQQAAELGWEALHQQLQEIDPVAAARIHPNDPQRLSRALEVFFISGKTLTELTQTSGDALPYQVHQFAIAPASRELLHQRIELRFHQMLASGFEAEVRALFARGDLHTDLPSIRCVGYRQMWSYIEGEISYDEMVYRGVCATRQLAKRQMTWLRGWEGGRWLDSENPDRARKEVLQVVGAIAD.

Residue 17-24 (GPTASGKT) participates in ATP binding. 19–24 (TASGKT) contributes to the substrate binding site. Interaction with substrate tRNA regions lie at residues 42–45 (DSAL), 166–170 (QRLSR), and 247–252 (RCVGYR).

It belongs to the IPP transferase family. Monomer. Mg(2+) is required as a cofactor.

The enzyme catalyses adenosine(37) in tRNA + dimethylallyl diphosphate = N(6)-dimethylallyladenosine(37) in tRNA + diphosphate. Catalyzes the transfer of a dimethylallyl group onto the adenine at position 37 in tRNAs that read codons beginning with uridine, leading to the formation of N6-(dimethylallyl)adenosine (i(6)A). This chain is tRNA dimethylallyltransferase, found in Salmonella paratyphi A (strain ATCC 9150 / SARB42).